Here is a 310-residue protein sequence, read N- to C-terminus: Ribosomal RNA small subunit methyltransferase H (310 aa).

Residues 33–35 (AGH), Asp-53, Phe-79, Asp-100, and Gln-107 contribute to the S-adenosyl-L-methionine site.

Belongs to the methyltransferase superfamily. RsmH family.

The protein localises to the cytoplasm. It carries out the reaction cytidine(1402) in 16S rRNA + S-adenosyl-L-methionine = N(4)-methylcytidine(1402) in 16S rRNA + S-adenosyl-L-homocysteine + H(+). Specifically methylates the N4 position of cytidine in position 1402 (C1402) of 16S rRNA. The chain is Ribosomal RNA small subunit methyltransferase H from Clostridium beijerinckii (strain ATCC 51743 / NCIMB 8052) (Clostridium acetobutylicum).